The following is a 274-amino-acid chain: Nitrogenase iron protein (274 aa).

Residue 8–15 participates in ATP binding; the sequence is GKGGIGKS. A [4Fe-4S] cluster-binding site is contributed by C94. R97 is modified (ADP-ribosylarginine; by dinitrogenase reductase ADP-ribosyltransferase). C131 is a binding site for [4Fe-4S] cluster.

It belongs to the NifH/BchL/ChlL family. In terms of assembly, homodimer. The cofactor is [4Fe-4S] cluster. In terms of processing, the reversible ADP-ribosylation of Arg-97 inactivates the nitrogenase reductase and regulates nitrogenase activity.

It carries out the reaction N2 + 8 reduced [2Fe-2S]-[ferredoxin] + 16 ATP + 16 H2O = H2 + 8 oxidized [2Fe-2S]-[ferredoxin] + 2 NH4(+) + 16 ADP + 16 phosphate + 6 H(+). In terms of biological role, the key enzymatic reactions in nitrogen fixation are catalyzed by the nitrogenase complex, which has 2 components: the iron protein and the molybdenum-iron protein. In Dehalococcoides mccartyi (strain ATCC BAA-2266 / KCTC 15142 / 195) (Dehalococcoides ethenogenes (strain 195)), this protein is Nitrogenase iron protein.